Here is a 468-residue protein sequence, read N- to C-terminus: Immunoglobulin superfamily member 21 (468 aa).

Positions 1 to 24 (MRAAPSLRRASCLLLAAILDLARG) are cleaved as a signal peptide. Ig-like domains follow at residues 25–132 (YLTV…VVLA) and 344–429 (PKIM…TRLI). An intrachain disulfide couples cysteine 46 to cysteine 116.

Interacts (Ig-like 1 domain) with NRXN2 (via Laminin G-like 1 domain) in a trans-interaction manner. In terms of tissue distribution, expressed in brain.

The protein resides in the postsynaptic cell membrane. Its function is as follows. Involved in synaptic inhibition in the brain. Selectively regulates inhibitory presynaptic differentiation through interacting with presynaptic NRXN2. This is Immunoglobulin superfamily member 21 from Rattus norvegicus (Rat).